The sequence spans 328 residues: Phenylalanine--tRNA ligase alpha subunit (328 aa).

Position 245 (Glu-245) interacts with Mg(2+).

The protein belongs to the class-II aminoacyl-tRNA synthetase family. Phe-tRNA synthetase alpha subunit type 1 subfamily. As to quaternary structure, tetramer of two alpha and two beta subunits. Requires Mg(2+) as cofactor.

The protein resides in the cytoplasm. It catalyses the reaction tRNA(Phe) + L-phenylalanine + ATP = L-phenylalanyl-tRNA(Phe) + AMP + diphosphate + H(+). This chain is Phenylalanine--tRNA ligase alpha subunit, found in Helicobacter pylori (strain P12).